The following is a 150-amino-acid chain: Anthranilate synthase component 1 (150 aa).

An L-tryptophan-binding site is contributed by Ser-40. Arg-119 serves as a coordination point for chorismate.

It belongs to the anthranilate synthase component I family. Heterotetramer consisting of two non-identical subunits: a beta subunit (TrpG) and a large alpha subunit (TrpE). Requires Mg(2+) as cofactor.

The catalysed reaction is chorismate + L-glutamine = anthranilate + pyruvate + L-glutamate + H(+). The protein operates within amino-acid biosynthesis; L-tryptophan biosynthesis; L-tryptophan from chorismate: step 1/5. Feedback inhibited by tryptophan. Its function is as follows. Part of a heterotetrameric complex that catalyzes the two-step biosynthesis of anthranilate, an intermediate in the biosynthesis of L-tryptophan. In the first step, the glutamine-binding beta subunit (TrpG) of anthranilate synthase (AS) provides the glutamine amidotransferase activity which generates ammonia as a substrate that, along with chorismate, is used in the second step, catalyzed by the large alpha subunit of AS (TrpE) to produce anthranilate. In the absence of TrpG, TrpE can synthesize anthranilate directly from chorismate and high concentrations of ammonia. The protein is Anthranilate synthase component 1 (trpE) of Citrobacter freundii.